The following is a 278-amino-acid chain: Potassium/proton antiporter CemA (278 aa).

The next 4 membrane-spanning stretches (helical) occupy residues Ile61–Gly81, Ala155–Thr175, Ile203–Ile223, and Phe238–Ile258.

This sequence belongs to the CemA family.

It is found in the plastid. Its subcellular location is the chloroplast inner membrane. The enzyme catalyses K(+)(in) + H(+)(out) = K(+)(out) + H(+)(in). Functionally, contributes to K(+)/H(+) antiport activity by supporting proton efflux to control proton extrusion and homeostasis in chloroplasts in a light-dependent manner to modulate photosynthesis. Prevents excessive induction of non-photochemical quenching (NPQ) under continuous-light conditions. Indirectly promotes efficient inorganic carbon uptake into chloroplasts. This Pyropia yezoensis (Susabi-nori) protein is Potassium/proton antiporter CemA.